A 174-amino-acid chain; its full sequence is Ribulose bisphosphate carboxylase small subunit, chloroplastic (174 aa).

A chloroplast-targeting transit peptide spans 1–45 (MAPTVMASSATSVAPFQGLKSTAGLPVSRRSNASSASVSNGGRIR).

It belongs to the RuBisCO small chain family. Heterohexadecamer of 8 large and 8 small subunits.

The protein localises to the plastid. Its subcellular location is the chloroplast. Functionally, ruBisCO catalyzes two reactions: the carboxylation of D-ribulose 1,5-bisphosphate, the primary event in carbon dioxide fixation, as well as the oxidative fragmentation of the pentose substrate. Both reactions occur simultaneously and in competition at the same active site. Although the small subunit is not catalytic it is essential for maximal activity. The polypeptide is Ribulose bisphosphate carboxylase small subunit, chloroplastic (Hordeum vulgare (Barley)).